The primary structure comprises 158 residues: uncharacterized protein (158 aa).

Positions 77-132 (AIKRNKIGGSKRSEVHSNRSKNYSSKKFRSQKCRRSRQKKRQNKKPNNSRFISSNK) are disordered. The span at 100-120 (SSKKFRSQKCRRSRQKKRQNK) shows a compositional bias: basic residues.

This is an uncharacterized protein from Acanthamoeba polyphaga mimivirus (APMV).